The sequence spans 581 residues: Pectinesterase 3 (581 aa).

Positions 1 to 55 are cleaved as a signal peptide; sequence MDTIKSFKGYGKVNELEQQAYEKKTRKRLIIIAVSSIVLIAVIIAAVAGVVIHNR. 5 N-linked (GlcNAc...) asparagine glycosylation sites follow: N101, N156, N200, N217, and N268. Residues T348 and Q378 each contribute to the substrate site. D401 (proton donor) is an active-site residue. Cysteines 415 and 435 form a disulfide. D422 (nucleophile) is an active-site residue. N477 carries N-linked (GlcNAc...) asparagine glycosylation. Residues R486 and W488 each coordinate substrate.

The protein in the N-terminal section; belongs to the PMEI family. It in the C-terminal section; belongs to the pectinesterase family.

The protein localises to the secreted. Its subcellular location is the cell wall. It carries out the reaction [(1-&gt;4)-alpha-D-galacturonosyl methyl ester](n) + n H2O = [(1-&gt;4)-alpha-D-galacturonosyl](n) + n methanol + n H(+). It functions in the pathway glycan metabolism; pectin degradation; 2-dehydro-3-deoxy-D-gluconate from pectin: step 1/5. May have roles in the deposition of pectin in developing tissues and in the wall loosening and cell separation that occurs in cell expansion, fruit ripening and abscission. This Phaseolus vulgaris (Kidney bean) protein is Pectinesterase 3 (MPE3).